The primary structure comprises 146 residues: Snaclec alboaggregin-B subunit beta (146 aa).

Positions 1 to 23 (MGRFIFGSFGLLVLFLSLSGTGA) are cleaved as a signal peptide. A C-type lectin domain is found at 24 to 143 (DCPSDWSSYD…CSRTYPFVCK (120 aa)). Cystine bridges form between Cys-25–Cys-36, Cys-53–Cys-142, and Cys-119–Cys-134.

This sequence belongs to the snaclec family. In terms of assembly, heterodimer of subunits alpha and beta; disulfide-linked. As to expression, expressed by the venom gland.

It localises to the secreted. Its function is as follows. Weakly agglutinates platelets at high doses by binding to GPIbalpha (GP1BA). The protein is Snaclec alboaggregin-B subunit beta of Trimeresurus albolabris (White-lipped pit viper).